We begin with the raw amino-acid sequence, 150 residues long: 3-hydroxyacyl-[acyl-carrier-protein] dehydratase FabZ (150 aa).

Histidine 56 is a catalytic residue.

Belongs to the thioester dehydratase family. FabZ subfamily.

It is found in the cytoplasm. It catalyses the reaction a (3R)-hydroxyacyl-[ACP] = a (2E)-enoyl-[ACP] + H2O. In terms of biological role, involved in unsaturated fatty acids biosynthesis. Catalyzes the dehydration of short chain beta-hydroxyacyl-ACPs and long chain saturated and unsaturated beta-hydroxyacyl-ACPs. This is 3-hydroxyacyl-[acyl-carrier-protein] dehydratase FabZ from Desulfotalea psychrophila (strain LSv54 / DSM 12343).